We begin with the raw amino-acid sequence, 549 residues long: Cation/acetate symporter ActP (549 aa).

A run of 13 helical transmembrane segments spans residues 33 to 53, 77 to 97, 103 to 123, 148 to 168, 183 to 203, 206 to 226, 262 to 282, 303 to 323, 355 to 375, 404 to 424, 428 to 448, 464 to 484, and 493 to 513; these read WQAIIMFLIFVVFTLGITYWA, LAIAGDYMSAASFLGISALVF, GLIYSLGFLVGWPIILFLIAE, ILSACGSLVVVALYLIAQMVG, IAVVLVGVLMMMYVLFGGMLA, WVQIIKAVLLLFGASFMAFMV, ISALSLGLGLMFGTAGLPHIL, GFMGYFYILTFIIGFGAIMLV, LFLGFISAVAFATILAVVAGL, VSKITVLVLGVIAIILGVLFE, IAFMVGLAFAIAASCNFPIIL, GGWLGLLTAVVLMILGPTIWV, and IFPYEYPALFSISVAFLGIWF.

It belongs to the sodium:solute symporter (SSF) (TC 2.A.21) family.

The protein localises to the cell inner membrane. Functionally, transports acetate. This is Cation/acetate symporter ActP from Salmonella agona (strain SL483).